The chain runs to 356 residues: MTKENICIVFGGKSAEHEVSILTAQNVLNAIDKDKYHVDIIYITNDGDWRKQNNITAEIISTDELHLENGEALEISQLLKESSSGQPYDAVFPLLHGPNGEDGTIQGLFEVLDVPYVGNGVLSAASSMDKLVMKQLFEHRGLPQLPYISFLRSEYEKYEHNILKLVNDKLNYPVFVKPANLGSSVGISKCNNEAELKEGIKEAFQFDRKLVIEQGVNAREIEVAVLGNDYPEATWPGEVVKDVAFYDYKSKYKDGKVQLQIPADLDEDVQLTLRNMALEAFKATDCSGLVRADFFVTEDNQIYINETNAMPGFTAFSMYPKLWENMGLSYPELITKLIELAKERHQDKQKNKYKID.

The region spanning 134–339 (KQLFEHRGLP…YPELITKLIE (206 aa)) is the ATP-grasp domain. 167–222 (NDKLNYPVFVKPANLGSSVGISKCNNEAELKEGIKEAFQFDRKLVIEQGVNAREIE) is an ATP binding site. Asp-293, Glu-306, and Asn-308 together coordinate Mg(2+).

The protein belongs to the D-alanine--D-alanine ligase family. It depends on Mg(2+) as a cofactor. Mn(2+) serves as cofactor.

It is found in the cytoplasm. It carries out the reaction 2 D-alanine + ATP = D-alanyl-D-alanine + ADP + phosphate + H(+). It functions in the pathway cell wall biogenesis; peptidoglycan biosynthesis. Functionally, cell wall formation. The chain is D-alanine--D-alanine ligase from Staphylococcus aureus (strain MSSA476).